Reading from the N-terminus, the 360-residue chain is Chorismate synthase (360 aa).

NADP(+) contacts are provided by arginine 48 and arginine 54. FMN is bound by residues 125–127, 246–247, glycine 286, 301–305, and arginine 327; these read RSS, NA, and KPTSS.

This sequence belongs to the chorismate synthase family. In terms of assembly, homotetramer. Requires FMNH2 as cofactor.

The enzyme catalyses 5-O-(1-carboxyvinyl)-3-phosphoshikimate = chorismate + phosphate. It participates in metabolic intermediate biosynthesis; chorismate biosynthesis; chorismate from D-erythrose 4-phosphate and phosphoenolpyruvate: step 7/7. Catalyzes the anti-1,4-elimination of the C-3 phosphate and the C-6 proR hydrogen from 5-enolpyruvylshikimate-3-phosphate (EPSP) to yield chorismate, which is the branch point compound that serves as the starting substrate for the three terminal pathways of aromatic amino acid biosynthesis. This reaction introduces a second double bond into the aromatic ring system. The protein is Chorismate synthase of Actinobacillus pleuropneumoniae serotype 7 (strain AP76).